The sequence spans 593 residues: NADH-quinone oxidoreductase subunit C/D (593 aa).

Residues 1–184 (MTADNAIFIP…DPYSLTLAKQ (184 aa)) are NADH dehydrogenase I subunit C. Residues 208–593 (DYMFLNLGPN…IDFVMADVDR (386 aa)) are NADH dehydrogenase I subunit D.

In the N-terminal section; belongs to the complex I 30 kDa subunit family. It in the C-terminal section; belongs to the complex I 49 kDa subunit family. NDH-1 is composed of 13 different subunits. Subunits NuoB, CD, E, F, and G constitute the peripheral sector of the complex.

It localises to the cell inner membrane. It catalyses the reaction a quinone + NADH + 5 H(+)(in) = a quinol + NAD(+) + 4 H(+)(out). Functionally, NDH-1 shuttles electrons from NADH, via FMN and iron-sulfur (Fe-S) centers, to quinones in the respiratory chain. The immediate electron acceptor for the enzyme in this species is believed to be ubiquinone. Couples the redox reaction to proton translocation (for every two electrons transferred, four hydrogen ions are translocated across the cytoplasmic membrane), and thus conserves the redox energy in a proton gradient. This chain is NADH-quinone oxidoreductase subunit C/D, found in Pseudomonas putida (strain ATCC 700007 / DSM 6899 / JCM 31910 / BCRC 17059 / LMG 24140 / F1).